A 219-amino-acid polypeptide reads, in one-letter code: Holliday junction branch migration complex subunit RuvA (219 aa).

The interval M1–P67 is domain I. Residues D68 to H146 are domain II. The flexible linker stretch occupies residues S147–P161. Positions I162 to A219 are domain III.

This sequence belongs to the RuvA family. As to quaternary structure, homotetramer. Forms an RuvA(8)-RuvB(12)-Holliday junction (HJ) complex. HJ DNA is sandwiched between 2 RuvA tetramers; dsDNA enters through RuvA and exits via RuvB. An RuvB hexamer assembles on each DNA strand where it exits the tetramer. Each RuvB hexamer is contacted by two RuvA subunits (via domain III) on 2 adjacent RuvB subunits; this complex drives branch migration. In the full resolvosome a probable DNA-RuvA(4)-RuvB(12)-RuvC(2) complex forms which resolves the HJ.

Its subcellular location is the cytoplasm. In terms of biological role, the RuvA-RuvB-RuvC complex processes Holliday junction (HJ) DNA during genetic recombination and DNA repair, while the RuvA-RuvB complex plays an important role in the rescue of blocked DNA replication forks via replication fork reversal (RFR). RuvA specifically binds to HJ cruciform DNA, conferring on it an open structure. The RuvB hexamer acts as an ATP-dependent pump, pulling dsDNA into and through the RuvAB complex. HJ branch migration allows RuvC to scan DNA until it finds its consensus sequence, where it cleaves and resolves the cruciform DNA. This chain is Holliday junction branch migration complex subunit RuvA, found in Synechococcus sp. (strain CC9311).